Consider the following 312-residue polypeptide: 1-phosphofructokinase (312 aa).

ATP-binding positions include serine 223–glycine 228 and glycine 254–aspartate 255. The active-site Proton acceptor is the aspartate 255.

It belongs to the carbohydrate kinase PfkB family.

The catalysed reaction is beta-D-fructose 1-phosphate + ATP = beta-D-fructose 1,6-bisphosphate + ADP + H(+). Its function is as follows. Catalyzes the ATP-dependent phosphorylation of fructose-l-phosphate to fructose-l,6-bisphosphate. This chain is 1-phosphofructokinase (fruK), found in Escherichia coli O157:H7.